The primary structure comprises 115 residues: Large ribosomal subunit protein bL19 (115 aa).

This sequence belongs to the bacterial ribosomal protein bL19 family.

In terms of biological role, this protein is located at the 30S-50S ribosomal subunit interface and may play a role in the structure and function of the aminoacyl-tRNA binding site. In Erwinia tasmaniensis (strain DSM 17950 / CFBP 7177 / CIP 109463 / NCPPB 4357 / Et1/99), this protein is Large ribosomal subunit protein bL19.